Here is a 698-residue protein sequence, read N- to C-terminus: Ubiquitin-like modifier-activating enzyme ATG7 (698 aa).

Positions F11–P13 match the FAP motif motif. K41 participates in a covalent cross-link: Glycyl lysine isopeptide (Lys-Gly) (interchain with G-Cter in ubiquitin). The Glycyl thioester intermediate role is filled by C567. S693 carries the post-translational modification Phosphoserine.

The protein belongs to the ATG7 family. As to quaternary structure, homodimer. Interacts with ATG3; this interaction is essential for the transfer of ATG8-like proteins's thioester from ATG7 to ATG3 and plays a role in the conjugation of ATG12 to ATG5. Interacts with ATG12. Forms intermediate conjugates with GABARAPL1. Forms intermediate conjugates with ATG8-like proteins such as GABARAP, GABARAPL2 or MAP1LC3A. Interacts with EP300 acetyltransferase. Interacts with FOXO1. Acetylated by EP300. In terms of processing, polyubiquitinated on Lys-41 via 'Lys-63'-linked ubiquitin by TRIM32; this modification positiely regulates ATG8 and ATG12 activating enzyme activity leading to initiation of autophagy under metabolic stress. As to expression, widely expressed.

The protein localises to the cytoplasm. Its subcellular location is the preautophagosomal structure. Functionally, E1-like activating enzyme involved in the 2 ubiquitin-like systems required for cytoplasm to vacuole transport (Cvt) and autophagy. Activates ATG12 for its conjugation with ATG5 as well as the ATG8 family proteins for their conjugation with phosphatidylethanolamine. Both systems are needed for the ATG8 association to Cvt vesicles and autophagosomes membranes. Required for autophagic death induced by caspase-8 inhibition. Facilitates LC3-I lipidation with phosphatidylethanolamine to form LC3-II which is found on autophagosomal membranes. Required for mitophagy which contributes to regulate mitochondrial quantity and quality by eliminating the mitochondria to a basal level to fulfill cellular energy requirements and preventing excess ROS production. Modulates p53/TP53 activity to regulate cell cycle and survival during metabolic stress. Also plays a key role in the maintenance of axonal homeostasis, the prevention of axonal degeneration, the maintenance of hematopoietic stem cells, the formation of Paneth cell granules, as well as in adipose differentiation. Plays a role in regulating the liver clock and glucose metabolism by mediating the autophagic degradation of CRY1 (clock repressor) in a time-dependent manner. This Rattus norvegicus (Rat) protein is Ubiquitin-like modifier-activating enzyme ATG7.